The chain runs to 617 residues: MKQSKMPIPTLREMPSDAQVISHALMLRAGYVRQVSAGVYSYLPLANRVIEKAKNIMRQEFEKIGAVEMLAPALLSAELWRESGRYETYGEDLYKLKNREKSDFILGPTHEETFTAIVRDSVKSYKQLPLNLYQIQPKYRDEKRPRNGLLRTREFIMKDAYSFHANYDSLDSVYDEYKAAYERIFTRSGLDFKAIIGDGGAMGGKDSQEFMAITSARTDLDRWVVLDKSVASFDEIPAEVQEEIKAELLKWIVSGEDTIAYSSESSYAANLEMATNEYKPSNRVIAEEEVIRVATPDVKSIDEVAAFLNVPEEQTIKTLFYIADGELVAALLVGNDQLNEVKLKNHLGADFFDVASEEEVANVVQAGFGSLGPVGLPENIKIIADRKVQDVRNAVVGANEDGYHLTGVNPGRDFTAEYVDIREVREGEISPDGQGVLNFARGIEIGHIFKLGTRYSASMGADVLDENGRAVPIIMGCYGIGVSRLLSAVMEQHARLFVNKTPKGEYRYAWGINFPKELAPFDVHLITVNVKDEEAQALTEKLEASLMGAGYEVLTDDRNERVGVKFSDSDLIGLPIRITVGKKAADGIVEVKIKATGDTIEVHADNVLETLEILSKK.

The protein belongs to the class-II aminoacyl-tRNA synthetase family. ProS type 1 subfamily. As to quaternary structure, homodimer.

It is found in the cytoplasm. It carries out the reaction tRNA(Pro) + L-proline + ATP = L-prolyl-tRNA(Pro) + AMP + diphosphate. Functionally, catalyzes the attachment of proline to tRNA(Pro) in a two-step reaction: proline is first activated by ATP to form Pro-AMP and then transferred to the acceptor end of tRNA(Pro). As ProRS can inadvertently accommodate and process non-cognate amino acids such as alanine and cysteine, to avoid such errors it has two additional distinct editing activities against alanine. One activity is designated as 'pretransfer' editing and involves the tRNA(Pro)-independent hydrolysis of activated Ala-AMP. The other activity is designated 'posttransfer' editing and involves deacylation of mischarged Ala-tRNA(Pro). The misacylated Cys-tRNA(Pro) is not edited by ProRS. This Streptococcus pneumoniae (strain 70585) protein is Proline--tRNA ligase.